We begin with the raw amino-acid sequence, 803 residues long: PR domain zinc finger protein 4 (803 aa).

In terms of domain architecture, SET spans 408–532 (KQLVLRQSIV…PESELLFYYS (125 aa)). 5 C2H2-type zinc fingers span residues 593–615 (WKCS…FMGH), 621–643 (HKCD…LKIH), 649–671 (YRCT…MVIH), 677–699 (LKCD…VLIH), and 705–727 (IKCP…LNSH). The C2H2-type 6; degenerate zinc finger occupies 733-755 (YVCEKCTKAYLTKYHLTRHLKTC). Residues 757-803 (EPSSSSSAQEEEDDESEEEDLADSMRTEDCRMGSAVYSTDESLSAHK) are disordered. Over residues 765 to 778 (QEEEDDESEEEDLA) the composition is skewed to acidic residues. A compositionally biased stretch (polar residues) spans 792 to 803 (VYSTDESLSAHK).

The protein belongs to the class V-like SAM-binding methyltransferase superfamily.

It localises to the nucleus. May function as a transcription factor involved in cell differentiation. The protein is PR domain zinc finger protein 4 (Prdm4) of Mus musculus (Mouse).